We begin with the raw amino-acid sequence, 362 residues long: Histidinol-phosphate aminotransferase (362 aa).

Lys-211 bears the N6-(pyridoxal phosphate)lysine mark.

This sequence belongs to the class-II pyridoxal-phosphate-dependent aminotransferase family. Histidinol-phosphate aminotransferase subfamily. As to quaternary structure, homodimer. Requires pyridoxal 5'-phosphate as cofactor.

It carries out the reaction L-histidinol phosphate + 2-oxoglutarate = 3-(imidazol-4-yl)-2-oxopropyl phosphate + L-glutamate. It functions in the pathway amino-acid biosynthesis; L-histidine biosynthesis; L-histidine from 5-phospho-alpha-D-ribose 1-diphosphate: step 7/9. This chain is Histidinol-phosphate aminotransferase, found in Serratia proteamaculans (strain 568).